The sequence spans 216 residues: Thymidine kinase (216 aa).

Residues 9-16 (GTMDCGKS) and 86-89 (DEAQ) each bind ATP. The Proton acceptor role is filled by glutamate 87.

The protein belongs to the thymidine kinase family. In terms of assembly, homotetramer.

It is found in the cytoplasm. It catalyses the reaction thymidine + ATP = dTMP + ADP + H(+). The polypeptide is Thymidine kinase (Streptomyces avermitilis (strain ATCC 31267 / DSM 46492 / JCM 5070 / NBRC 14893 / NCIMB 12804 / NRRL 8165 / MA-4680)).